The sequence spans 238 residues: Pyridoxine 5'-phosphate synthase (238 aa).

Asparagine 7 provides a ligand contact to 3-amino-2-oxopropyl phosphate. 9-10 contacts 1-deoxy-D-xylulose 5-phosphate; it reads DH. Arginine 18 contacts 3-amino-2-oxopropyl phosphate. The Proton acceptor role is filled by histidine 43. 2 residues coordinate 1-deoxy-D-xylulose 5-phosphate: arginine 45 and histidine 50. Glutamate 70 serves as the catalytic Proton acceptor. Residue threonine 100 participates in 1-deoxy-D-xylulose 5-phosphate binding. Residue histidine 191 is the Proton donor of the active site. Residues glycine 192 and 213–214 each bind 3-amino-2-oxopropyl phosphate; that span reads GH.

It belongs to the PNP synthase family. As to quaternary structure, homooctamer; tetramer of dimers.

It is found in the cytoplasm. It catalyses the reaction 3-amino-2-oxopropyl phosphate + 1-deoxy-D-xylulose 5-phosphate = pyridoxine 5'-phosphate + phosphate + 2 H2O + H(+). The protein operates within cofactor biosynthesis; pyridoxine 5'-phosphate biosynthesis; pyridoxine 5'-phosphate from D-erythrose 4-phosphate: step 5/5. Its function is as follows. Catalyzes the complicated ring closure reaction between the two acyclic compounds 1-deoxy-D-xylulose-5-phosphate (DXP) and 3-amino-2-oxopropyl phosphate (1-amino-acetone-3-phosphate or AAP) to form pyridoxine 5'-phosphate (PNP) and inorganic phosphate. The chain is Pyridoxine 5'-phosphate synthase from Thermosynechococcus vestitus (strain NIES-2133 / IAM M-273 / BP-1).